The chain runs to 711 residues: Ribosomal RNA large subunit methyltransferase K/L (711 aa).

The 112-residue stretch at 43-154 folds into the THUMP domain; that stretch reads LAYRITLWSR…RGQITLGINF (112 aa).

It belongs to the methyltransferase superfamily. RlmKL family.

It localises to the cytoplasm. It carries out the reaction guanosine(2445) in 23S rRNA + S-adenosyl-L-methionine = N(2)-methylguanosine(2445) in 23S rRNA + S-adenosyl-L-homocysteine + H(+). It catalyses the reaction guanosine(2069) in 23S rRNA + S-adenosyl-L-methionine = N(2)-methylguanosine(2069) in 23S rRNA + S-adenosyl-L-homocysteine + H(+). In terms of biological role, specifically methylates the guanine in position 2445 (m2G2445) and the guanine in position 2069 (m7G2069) of 23S rRNA. The polypeptide is Ribosomal RNA large subunit methyltransferase K/L (Shewanella loihica (strain ATCC BAA-1088 / PV-4)).